A 251-amino-acid polypeptide reads, in one-letter code: MNLNSIPAFDDNYIWVLNDEAGRCLIVDPGDAEPVLNAISANNWQPEAIFLTHHHHDHVGGVKELVEKFPQIVVYGPQETQDKGTTQVVKDGETAFVLGHEFSVIATPGHTLGHICYFSKPYLFCGDTLFSGGCGRLFEGTPSQMYQSLKKLSALPDDTLVCCAHEYTLSNMKFALSILPHDLSINDYYRKVKELRAKNQITLPVILKNERQINVFLRTEDIDLINVINEETLLQQPEERFAWLRSKKDRF.

Zn(2+)-binding residues include His-53, His-55, Asp-57, His-58, His-110, Asp-127, and His-165.

The protein belongs to the metallo-beta-lactamase superfamily. Glyoxalase II family. As to quaternary structure, monomer. Zn(2+) serves as cofactor.

The catalysed reaction is an S-(2-hydroxyacyl)glutathione + H2O = a 2-hydroxy carboxylate + glutathione + H(+). Its pathway is secondary metabolite metabolism; methylglyoxal degradation; (R)-lactate from methylglyoxal: step 2/2. Thiolesterase that catalyzes the hydrolysis of S-D-lactoyl-glutathione to form glutathione and D-lactic acid. The chain is Hydroxyacylglutathione hydrolase from Escherichia coli O6:K15:H31 (strain 536 / UPEC).